Here is a 187-residue protein sequence, read N- to C-terminus: Ribosome-recycling factor (187 aa).

Belongs to the RRF family.

It localises to the cytoplasm. Responsible for the release of ribosomes from messenger RNA at the termination of protein biosynthesis. May increase the efficiency of translation by recycling ribosomes from one round of translation to another. In Methylobacterium radiotolerans (strain ATCC 27329 / DSM 1819 / JCM 2831 / NBRC 15690 / NCIMB 10815 / 0-1), this protein is Ribosome-recycling factor.